Reading from the N-terminus, the 192-residue chain is UPF0149 protein VIBHAR_03551 (192 aa).

It belongs to the UPF0149 family.

This Vibrio campbellii (strain ATCC BAA-1116) protein is UPF0149 protein VIBHAR_03551.